A 377-amino-acid polypeptide reads, in one-letter code: tRNA-specific 2-thiouridylase MnmA (377 aa).

ATP contacts are provided by residues 12 to 19 (GMSGGVDS) and methionine 38. The tract at residues 98–100 (NPD) is interaction with target base in tRNA. Residue cysteine 103 is the Nucleophile of the active site. A disulfide bridge links cysteine 103 with cysteine 200. Residue glycine 127 coordinates ATP. An interaction with tRNA region spans residues 150-152 (KDQ). Cysteine 200 functions as the Cysteine persulfide intermediate in the catalytic mechanism. Positions 314-315 (RY) are interaction with tRNA.

The protein belongs to the MnmA/TRMU family.

Its subcellular location is the cytoplasm. It catalyses the reaction S-sulfanyl-L-cysteinyl-[protein] + uridine(34) in tRNA + AH2 + ATP = 2-thiouridine(34) in tRNA + L-cysteinyl-[protein] + A + AMP + diphosphate + H(+). Functionally, catalyzes the 2-thiolation of uridine at the wobble position (U34) of tRNA, leading to the formation of s(2)U34. The chain is tRNA-specific 2-thiouridylase MnmA from Limosilactobacillus reuteri (strain DSM 20016) (Lactobacillus reuteri).